The following is a 189-amino-acid chain: Phosphoheptose isomerase (189 aa).

The SIS domain occupies 34–189; sequence VADTLKNGKK…CQAVDEAFRG (156 aa). 49–51 is a substrate binding site; it reads NGG. Zn(2+) contacts are provided by H58 and E62. Substrate is bound by residues E62, 91-92, 117-119, S122, and Q169; these read ND and STS. Zn(2+) is bound by residues Q169 and H177.

This sequence belongs to the SIS family. GmhA subfamily. In terms of assembly, homotetramer. It depends on Zn(2+) as a cofactor.

The protein localises to the cytoplasm. It carries out the reaction 2 D-sedoheptulose 7-phosphate = D-glycero-alpha-D-manno-heptose 7-phosphate + D-glycero-beta-D-manno-heptose 7-phosphate. It functions in the pathway carbohydrate biosynthesis; D-glycero-D-manno-heptose 7-phosphate biosynthesis; D-glycero-alpha-D-manno-heptose 7-phosphate and D-glycero-beta-D-manno-heptose 7-phosphate from sedoheptulose 7-phosphate: step 1/1. Its function is as follows. Catalyzes the isomerization of sedoheptulose 7-phosphate in D-glycero-D-manno-heptose 7-phosphate. In Campylobacter concisus (strain 13826), this protein is Phosphoheptose isomerase.